Here is a 247-residue protein sequence, read N- to C-terminus: V-type proton ATPase subunit D (247 aa).

Belongs to the V-ATPase D subunit family. As to quaternary structure, V-ATPase is a heteromultimeric enzyme made up of two complexes: the ATP-hydrolytic V1 complex and the proton translocation V0 complex. The V1 complex consists of three catalytic AB heterodimers that form a heterohexamer, three peripheral stalks each consisting of EG heterodimers, one central rotor including subunits D and F, and the regulatory subunits C and H. The proton translocation complex V0 consists of the proton transport subunit a, a ring of proteolipid subunits c9c'', rotary subunit d, subunits e and f, and the accessory subunits ATP6AP1/Ac45 and ATP6AP2/PRR. Interacts with SNX10.

The protein resides in the membrane. It is found in the cytoplasmic vesicle. It localises to the clathrin-coated vesicle membrane. Its subcellular location is the cytoplasm. The protein localises to the cytoskeleton. The protein resides in the microtubule organizing center. It is found in the centrosome. It localises to the cell projection. Its subcellular location is the cilium. Functionally, subunit of the V1 complex of vacuolar(H+)-ATPase (V-ATPase), a multisubunit enzyme composed of a peripheral complex (V1) that hydrolyzes ATP and a membrane integral complex (V0) that translocates protons. V-ATPase is responsible for acidifying and maintaining the pH of intracellular compartments and in some cell types, is targeted to the plasma membrane, where it is responsible for acidifying the extracellular environment. May play a role in cilium biogenesis through regulation of the transport and the localization of proteins to the cilium. This Homo sapiens (Human) protein is V-type proton ATPase subunit D (ATP6V1D).